Consider the following 316-residue polypeptide: Secreted effector protein SifB (316 aa).

It belongs to the Sif family.

It localises to the secreted. Its subcellular location is the host cytoplasm. Its function is as follows. Effector proteins function to alter host cell physiology and promote bacterial survival in host tissues. The polypeptide is Secreted effector protein SifB (sifB) (Salmonella typhimurium (strain LT2 / SGSC1412 / ATCC 700720)).